Consider the following 517-residue polypeptide: MSGSCSSRKCFSVPATSLCSTEVSCGGPICLPSSCQSQTWQLVTCQDSCGSSSCGPQCRQPSCPVSSCAQPLCCDPVICEPSCSVSSGCQPVCCEATTCEPSCSVSNCYQPVCFEATICEPSCSVSNCCQPVCFEATVCEPSCSVSSCAQPVCCEPAICEPSCSVSSCCQPVGSEATSCQPVLCVPTSCQPVLCKSSCCQPVVCEPSCCSAVCTLPSSCQPVVCEPSCCQPVCPTPTCSVTSSCQAVCCDPSPCEPSCSESSICQPATCVALVCEPVCLRPVCCVQSSCEPPSVPSTCQEPSCCVSSICQPICSEPSPCSPAVCVSSPCQPTCYVVKRCPSVCPEPVSCPSTSCRPLSCSPGSSASAICRPTCPRTFYIPSSSKRPCSATISYRPVSRPICRPICSGLLTYRQPYMTSISYRPACYRPCYSILRRPACVTSYSCRPVYFRPSCTESDSCKRDCKKSTSSQLDCVDTTPCKVDVSEEAPCQPTEAKPISPTTREAAAAQPAASKPANC.

11 consecutive repeat copies span residues 73 to 77 (CCDPV), 93 to 97 (CCEAT), 128 to 132 (CCQPV), 153 to 157 (CCEPA), 168 to 172 (CCQPV), 198 to 202 (CCQPV), 208 to 212 (CCSAV), 228 to 232 (CCQPV), 248 to 252 (CCDPS), 283 to 287 (CCVQS), and 303 to 307 (CCVSS). The segment at 73–307 (CCDPVICEPS…CQEPSCCVSS (235 aa)) is 11 X 5 AA repeats of C-C-X(3). The disordered stretch occupies residues 483–517 (VSEEAPCQPTEAKPISPTTREAAAAQPAASKPANC). Low complexity predominate over residues 504–517 (AAAAQPAASKPANC).

It belongs to the KRTAP type 16 family.

In Homo sapiens (Human), this protein is Keratin-associated protein 16-1 (KRTAP16-1).